We begin with the raw amino-acid sequence, 1069 residues long: Protocadherin-8 (1069 aa).

A signal peptide spans 1–29 (MSPVKRWGSPCLFPLQLFSLCWVLSVAQS). Cadherin domains follow at residues 30–135 (KTVR…APRF), 136–245 (PRAQ…SPAF), 247–354 (QGAV…APDI), 393–497 (QETG…APLF), 498–609 (TKPV…SPVL), and 615–721 (ANGS…VPAS). At 30–747 (KTVRYSTFEE…SGPSLQWDTP (718 aa)) the chain is on the extracellular side. Asparagine 616 carries an N-linked (GlcNAc...) asparagine glycan. Positions 719-738 (PASAGSPEHFRPPGSRLAPS) are disordered. The chain crosses the membrane as a helical span at residues 748-768 (LIVIIVLAGSCTLLLAAIIAI). The Cytoplasmic portion of the chain corresponds to 769–1069 (ATTCNRRKKE…SPKKGTNENV (301 aa)). Disordered stretches follow at residues 777–859 (KEVR…TGES), 905–927 (REAEKFSGKDSGKGDSDFNDSDS), and 1031–1069 (LSPPRPGRLPDLQEIGVPLYESPPGGRYVSPKKGTNENV). Composition is skewed to basic and acidic residues over residues 780-790 (RKGGALREERP) and 905-920 (REAEKFSGKDSGKGDS). A Phosphoserine modification is found at serine 1052.

As to quaternary structure, the N-terminal extracellular domain forms homophilic interactions; these interactions activate p38 MAPK via TAOK2 and trigger endocytosis. Interacts with CDH2; this interaction may lead to CDH2 cointernalization. Interacts with CDH11. Interacts with TAOK2. As to expression, enriched in brain relative to peripheral tissues, with low expression in the testis. Expressed in hippocampal neurons (at protein level).

Its subcellular location is the cell membrane. It is found in the cell projection. It localises to the dendrite. The protein localises to the presynaptic cell membrane. The protein resides in the postsynaptic cell membrane. Its function is as follows. Calcium-dependent cell-adhesion protein. May play a role in activity-induced synaptic reorganization underlying long term memory. Could be involved in CDH2 internalization through TAOK2/p38 MAPK pathway. In hippocampal neurons, may play a role in the down-regulation of dendritic spines, maybe through its action on CDH2 endocytosis. The sequence is that of Protocadherin-8 (Pcdh8) from Rattus norvegicus (Rat).